The primary structure comprises 264 residues: Putative lipoate-protein ligase A (264 aa).

A BPL/LPL catalytic domain is found at 26 to 213 (EHGIAIARLW…SVKHALGEPE (188 aa)). ATP is bound by residues Arg68, 73 to 76 (GAVF), and Lys130. Lys130 is a binding site for (R)-lipoate.

Belongs to the LplA family. In terms of assembly, monomer.

It localises to the cytoplasm. It catalyses the reaction L-lysyl-[lipoyl-carrier protein] + (R)-lipoate + ATP = N(6)-[(R)-lipoyl]-L-lysyl-[lipoyl-carrier protein] + AMP + diphosphate + H(+). Its pathway is protein modification; protein lipoylation via exogenous pathway; protein N(6)-(lipoyl)lysine from lipoate: step 1/2. It participates in protein modification; protein lipoylation via exogenous pathway; protein N(6)-(lipoyl)lysine from lipoate: step 2/2. Functionally, catalyzes both the ATP-dependent activation of exogenously supplied lipoate to lipoyl-AMP and the transfer of the activated lipoyl onto the lipoyl domains of lipoate-dependent enzymes. The chain is Putative lipoate-protein ligase A (lplA) from Aeropyrum pernix (strain ATCC 700893 / DSM 11879 / JCM 9820 / NBRC 100138 / K1).